Here is a 487-residue protein sequence, read N- to C-terminus: Serine carboxypeptidase-like 38 (487 aa).

The first 20 residues, 1-20, serve as a signal peptide directing secretion; the sequence is MGKQQDWSVTACIFLSLSLA. 3 disulfides stabilise this stretch: Cys119–Cys368, Cys280–Cys290, and Cys315–Cys336. Ser215 is an active-site residue. The N-linked (GlcNAc...) asparagine glycan is linked to Asn233. Asn317 and Asn357 each carry an N-linked (GlcNAc...) asparagine glycan. Residue Asp407 is part of the active site. Residues Asn423 and Asn449 are each glycosylated (N-linked (GlcNAc...) asparagine). Residue His460 is part of the active site.

The protein belongs to the peptidase S10 family. As to expression, expressed in seedlings, roots, leaves, flowers and siliques.

It localises to the secreted. Functionally, probable carboxypeptidase. In Arabidopsis thaliana (Mouse-ear cress), this protein is Serine carboxypeptidase-like 38 (SCPL38).